Here is a 366-residue protein sequence, read N- to C-terminus: tRNA/tmRNA (uracil-C(5))-methyltransferase (366 aa).

Positions 190, 218, 223, 239, and 299 each coordinate S-adenosyl-L-methionine. Residue Cys-324 is the Nucleophile of the active site. Glu-358 functions as the Proton acceptor in the catalytic mechanism.

This sequence belongs to the class I-like SAM-binding methyltransferase superfamily. RNA M5U methyltransferase family. TrmA subfamily.

The catalysed reaction is uridine(54) in tRNA + S-adenosyl-L-methionine = 5-methyluridine(54) in tRNA + S-adenosyl-L-homocysteine + H(+). It catalyses the reaction uridine(341) in tmRNA + S-adenosyl-L-methionine = 5-methyluridine(341) in tmRNA + S-adenosyl-L-homocysteine + H(+). Its function is as follows. Dual-specificity methyltransferase that catalyzes the formation of 5-methyluridine at position 54 (m5U54) in all tRNAs, and that of position 341 (m5U341) in tmRNA (transfer-mRNA). The sequence is that of tRNA/tmRNA (uracil-C(5))-methyltransferase from Salmonella newport (strain SL254).